The chain runs to 251 residues: Hydroxyacylglutathione hydrolase (251 aa).

Zn(2+) is bound by residues His53, His55, Asp57, His58, His110, Asp127, and His165.

Belongs to the metallo-beta-lactamase superfamily. Glyoxalase II family. Monomer. It depends on Zn(2+) as a cofactor.

The enzyme catalyses an S-(2-hydroxyacyl)glutathione + H2O = a 2-hydroxy carboxylate + glutathione + H(+). The protein operates within secondary metabolite metabolism; methylglyoxal degradation; (R)-lactate from methylglyoxal: step 2/2. Thiolesterase that catalyzes the hydrolysis of S-D-lactoyl-glutathione to form glutathione and D-lactic acid. The protein is Hydroxyacylglutathione hydrolase of Escherichia fergusonii (strain ATCC 35469 / DSM 13698 / CCUG 18766 / IAM 14443 / JCM 21226 / LMG 7866 / NBRC 102419 / NCTC 12128 / CDC 0568-73).